Here is a 334-residue protein sequence, read N- to C-terminus: Fructose-1,6-bisphosphatase class 1 (334 aa).

The Mg(2+) site is built by E87, D106, L108, and D109. Residues 109 to 112 (DGSS), N208, and K274 contribute to the substrate site. E280 contacts Mg(2+).

This sequence belongs to the FBPase class 1 family. Homotetramer. Requires Mg(2+) as cofactor.

The protein localises to the cytoplasm. The enzyme catalyses beta-D-fructose 1,6-bisphosphate + H2O = beta-D-fructose 6-phosphate + phosphate. The protein operates within carbohydrate biosynthesis; gluconeogenesis. The sequence is that of Fructose-1,6-bisphosphatase class 1 from Psychrobacter sp. (strain PRwf-1).